Reading from the N-terminus, the 427-residue chain is Enolase (427 aa).

(2R)-2-phosphoglycerate is bound at residue Gln-163. Catalysis depends on Glu-205, which acts as the Proton donor. Mg(2+) contacts are provided by Asp-242, Glu-287, and Asp-314. The (2R)-2-phosphoglycerate site is built by Lys-339, Arg-368, Ser-369, and Lys-390. The active-site Proton acceptor is Lys-339.

It belongs to the enolase family. Requires Mg(2+) as cofactor.

It localises to the cytoplasm. It is found in the secreted. The protein localises to the cell surface. The enzyme catalyses (2R)-2-phosphoglycerate = phosphoenolpyruvate + H2O. It participates in carbohydrate degradation; glycolysis; pyruvate from D-glyceraldehyde 3-phosphate: step 4/5. Functionally, catalyzes the reversible conversion of 2-phosphoglycerate (2-PG) into phosphoenolpyruvate (PEP). It is essential for the degradation of carbohydrates via glycolysis. The protein is Enolase of Solibacter usitatus (strain Ellin6076).